A 263-amino-acid polypeptide reads, in one-letter code: S-acyl fatty acid synthase thioesterase, medium chain (263 aa).

At Met1 the chain carries N-acetylmethionine. Catalysis depends on residues Ser101 and His237. The interval 262–263 (LT) is important for interaction with FASN.

The protein belongs to the thioesterase family. As to quaternary structure, interacts (via C-terminus) with FASN.

The protein resides in the cytoplasm. It localises to the cytosol. The catalysed reaction is (9Z)-octadecenoyl-[ACP] + H2O = (9Z)-octadecenoate + holo-[ACP] + H(+). It catalyses the reaction decanoyl-CoA + H2O = decanoate + CoA + H(+). The enzyme catalyses dodecanoyl-CoA + H2O = dodecanoate + CoA + H(+). It carries out the reaction tetradecanoyl-CoA + H2O = tetradecanoate + CoA + H(+). The catalysed reaction is hexadecanoyl-CoA + H2O = hexadecanoate + CoA + H(+). Its function is as follows. Contributes to the release of free fatty acids from fatty acid synthase (FASN). Has broad substrate specificity, giving rise to a range of free fatty acids with chain lengths between 10 and 16 carbon atoms (C10 - C16). In Rattus norvegicus (Rat), this protein is S-acyl fatty acid synthase thioesterase, medium chain.